Reading from the N-terminus, the 186-residue chain is ADP-ribosylation factor-like protein 8B (186 aa).

The segment at residues 1 to 19 (MLALISRLLDWFRSLFWKE) is an intramembrane region (note=Mediates targeting to membranes). Residues 29-35 (QYSGKTT), 71-75 (DIGGQ), and 130-133 (NKRD) contribute to the GTP site. Residue Lys-141 forms a Glycyl lysine isopeptide (Lys-Gly) (interchain with G-Cter in ubiquitin) linkage.

The protein belongs to the small GTPase superfamily. Arf family. Interacts with tubulin. Interacts with BORCS5; recruits ARL8B to lysosomes. Interacts with VPS41; the interaction mediates the recruitment of the HOPS complex to lysosomes. Interacts (GTP-bound form) with PLEKHM2 (via RUN domain); the interaction is required to recruit the motor protein kinesin-1 on lysosomes. Interacts (GTP-bound form) with PLEKHM1 (via RUN domain); the interaction is required for PLEKHM1 localization to lysosomes and for ARL8B function in delivery and degradation of endocytic and autophagic cargo in lysosomes. PLEKHM1 and PLEKHM2 compete for interaction with ARL8B. Interacts (GTP-bound form) with RUFY1; the interaction is required for RUFY1 endosomal location. When GTP-bound, interacts with RUFY3 and RUFY4, but not with RUFY1, nor RUFY2. Post-translationally, ubiquitinated at Lys-141 by RNF167, leading to its degradation.

Its subcellular location is the late endosome membrane. The protein localises to the lysosome membrane. It localises to the cytoplasm. The protein resides in the cytoskeleton. It is found in the spindle. Its subcellular location is the cell projection. The protein localises to the axon. It localises to the synapse. The protein resides in the cytolytic granule membrane. It is found in the early endosome membrane. It carries out the reaction GTP + H2O = GDP + phosphate + H(+). Functionally, small GTPase which cycles between active GTP-bound and inactive GDP-bound states. In its active state, binds to a variety of effector proteins playing a key role in the regulation of lysosomal positioning which is important for nutrient sensing, natural killer cell-mediated cytotoxicity and antigen presentation. Along with its effectors, orchestrates lysosomal transport and fusion. Localizes specifically to lysosomal membranes and mediates anterograde lysosomal motility by recruiting PLEKHM2, which in turn recruits the motor protein kinesin-1 on lysosomes. Required for lysosomal and cytolytic granule exocytosis. Critical factor involved in NK cell-mediated cytotoxicity. Drives the polarization of cytolytic granules and microtubule-organizing centers (MTOCs) toward the immune synapse between effector NK lymphocytes and target cells. In neurons, mediates the anterograde axonal long-range transport of presynaptic lysosome-related vesicles required for presynaptic biogenesis and synaptic function. Also acts as a regulator of endosome to lysosome trafficking pathways of special significance for host defense. Recruits RUFY1 onto early endosomes regulating endosomes to trans-Golgi network proteins retrieval. Regulates cargo trafficking to lysosomes by binding to PLEKHM1 and recruiting the HOPS subunit VPS41, resulting in functional assembly of the HOPS complex on lysosomal membranes. Plays an important role in cargo delivery to lysosomes for antigen presentation and microbial killing. Directs the intersection of CD1d with lipid antigens in lysosomes, and plays a role in intersecting phagosomes with lysosomes to generate phagolysosomes that kill microbes. Involved in the process of MHC II presentation. Regulates the delivery of antigens to lysosomes and the formation of MHC II-peptide complexes through the recruitment of the HOPS complex to lysosomes allowing the fusion of late endosomes to lysosomes. May play a role in chromosome segregation. The sequence is that of ADP-ribosylation factor-like protein 8B (ARL8B) from Macaca fascicularis (Crab-eating macaque).